The following is a 311-amino-acid chain: Malate dehydrogenase (311 aa).

Residues 7–13 (GAAGGIG) and D34 contribute to the NAD(+) site. Substrate contacts are provided by R81 and R87. Residues N94 and 117 to 119 (ITN) each bind NAD(+). N119 and R153 together coordinate substrate. The active-site Proton acceptor is H177. M227 contacts NAD(+).

This sequence belongs to the LDH/MDH superfamily. MDH type 1 family. Homodimer.

It catalyses the reaction (S)-malate + NAD(+) = oxaloacetate + NADH + H(+). Catalyzes the reversible oxidation of malate to oxaloacetate. The chain is Malate dehydrogenase from Shewanella denitrificans (strain OS217 / ATCC BAA-1090 / DSM 15013).